The sequence spans 605 residues: Protein Spindly (605 aa).

Met-1 is subject to N-acetylmethionine. Positions 2–442 (EADIITNLRC…ELKLKYEPEE (441 aa)) form a coiled coil. Ser-513, Ser-515, and Ser-555 each carry phosphoserine. The segment at 544–580 (ALSERSGNTPNSPRLAAESKLQTEVKEGKETSSKLEK) is disordered. The span at 564-580 (LQTEVKEGKETSSKLEK) shows a compositional bias: basic and acidic residues.

This sequence belongs to the Spindly family. In terms of assembly, interacts with KNTC1 and ZW10. These interactions appear weak and may be transient or indirect. Interacts with dynein intermediate chain and dynactin (DCTN1). Interacts with the catalytically active form of USP45. Post-translationally, monoubiquitinated with'Lys-48' linkage. Deubiquitinated by USP45.

It is found in the cytoplasm. Its subcellular location is the cytoskeleton. The protein resides in the microtubule organizing center. It localises to the centrosome. The protein localises to the chromosome. It is found in the centromere. Its subcellular location is the kinetochore. The protein resides in the nucleus. It localises to the spindle pole. In terms of biological role, required for the localization of dynein and dynactin to the mitotic kintochore. Dynein is believed to control the initial lateral interaction between the kinetochore and spindle microtubules and to facilitate the subsequent formation of end-on kinetochore-microtubule attachments mediated by the NDC80 complex. Also required for correct spindle orientation. Does not appear to be required for the removal of spindle assembly checkpoint (SAC) proteins from the kinetochore upon bipolar spindle attachment. Acts as an adapter protein linking the dynein motor complex to various cargos and converts dynein from a non-processive to a highly processive motor in the presence of dynactin. Facilitates the interaction between dynein and dynactin and activates dynein processivity (the ability to move along a microtubule for a long distance without falling off the track). Plays a role in cell migration. The chain is Protein Spindly from Homo sapiens (Human).